The chain runs to 494 residues: Probable cytosol aminopeptidase (494 aa).

The Mn(2+) site is built by Lys-260 and Asp-265. The active site involves Lys-272. Mn(2+) is bound by residues Asp-283, Asp-342, and Glu-344. Arg-346 is an active-site residue.

It belongs to the peptidase M17 family. The cofactor is Mn(2+).

The protein resides in the cytoplasm. The enzyme catalyses Release of an N-terminal amino acid, Xaa-|-Yaa-, in which Xaa is preferably Leu, but may be other amino acids including Pro although not Arg or Lys, and Yaa may be Pro. Amino acid amides and methyl esters are also readily hydrolyzed, but rates on arylamides are exceedingly low.. The catalysed reaction is Release of an N-terminal amino acid, preferentially leucine, but not glutamic or aspartic acids.. Functionally, presumably involved in the processing and regular turnover of intracellular proteins. Catalyzes the removal of unsubstituted N-terminal amino acids from various peptides. The polypeptide is Probable cytosol aminopeptidase (Bacillus cereus (strain ATCC 10987 / NRS 248)).